The sequence spans 226 residues: Cytidylate kinase (226 aa).

Residue 10–18 (GFSSTGKST) participates in ATP binding.

Belongs to the cytidylate kinase family. Type 1 subfamily.

It localises to the cytoplasm. It catalyses the reaction CMP + ATP = CDP + ADP. The enzyme catalyses dCMP + ATP = dCDP + ADP. This is Cytidylate kinase from Flavobacterium psychrophilum (strain ATCC 49511 / DSM 21280 / CIP 103535 / JIP02/86).